Here is a 918-residue protein sequence, read N- to C-terminus: Calcium-transporting ATPase type 2C member 1 (918 aa).

Residues methionine 1 to glutamine 78 lie on the Cytoplasmic side of the membrane. A helical membrane pass occupies residues phenylalanine 79 to isoleucine 95. Residues leucine 96–glutamine 99 are Extracellular-facing. A helical transmembrane segment spans residues phenylalanine 100 to glutamate 121. The Cytoplasmic portion of the chain corresponds to tyrosine 122 to aspartate 262. The chain crosses the membrane as a helical span at residues leucine 263 to valine 282. The Extracellular portion of the chain corresponds to glycine 283 to phenylalanine 294. The helical transmembrane segment at threonine 295–threonine 316 threads the bilayer. Over leucine 317–lysine 699 the chain is Cytoplasmic. Aspartate 349 serves as the catalytic 4-aspartylphosphate intermediate. Residues aspartate 643 and aspartate 647 each contribute to the Mg(2+) site. Residues asparagine 700–methionine 722 traverse the membrane as a helical segment. Residues asparagine 723–proline 727 lie on the Extracellular side of the membrane. A helical transmembrane segment spans residues leucine 728–glutamate 751. Topologically, residues proline 752–isoleucine 775 are cytoplasmic. A helical transmembrane segment spans residues leucine 776 to tryptophan 794. Over arginine 795–valine 801 the chain is Extracellular. A helical transmembrane segment spans residues isoleucine 802–serine 827. The Cytoplasmic segment spans residues glutamine 828 to methionine 842. The chain crosses the membrane as a helical span at residues phenylalanine 843–proline 862. Residues leucine 863 to leucine 875 lie on the Extracellular side of the membrane. A helical membrane pass occupies residues aspartate 876–glutamate 892. At isoleucine 893–valine 918 the chain is on the cytoplasmic side.

It belongs to the cation transport ATPase (P-type) (TC 3.A.3) family. Type IIA subfamily. As to quaternary structure, monomer. Homodimer. Expressed in hippocampal neurons in the CA3 region of the Amon's horn (at protein level). Expressed in brain, heart, lung, stomach, liver, colon and mammary gland.

The protein localises to the golgi apparatus. It localises to the trans-Golgi network membrane. Its subcellular location is the golgi stack membrane. The catalysed reaction is Ca(2+)(in) + ATP + H2O = Ca(2+)(out) + ADP + phosphate + H(+). It carries out the reaction Mn(2+)(in) + ATP + H2O = Mn(2+)(out) + ADP + phosphate + H(+). ATP-driven pump that supplies the Golgi apparatus with Ca(2+) and Mn(2+) ions, both essential cofactors for processing and trafficking of newly synthesized proteins in the secretory pathway. Within a catalytic cycle, acquires Ca(2+) or Mn(2+) ions on the cytoplasmic side of the membrane and delivers them to the lumenal side. The transfer of ions across the membrane is coupled to ATP hydrolysis and is associated with a transient phosphorylation that shifts the pump conformation from inward-facing to outward-facing state. Plays a primary role in the maintenance of Ca(2+) homeostasis in the trans-Golgi compartment with a functional impact on Golgi and post-Golgi protein sorting as well as a structural impact on cisternae morphology. Responsible for loading the Golgi stores with Ca(2+) ions in keratinocytes, contributing to keratinocyte differentiation and epidermis integrity. Participates in Ca(2+) and Mn(2+) ions uptake into the Golgi store of hippocampal neurons and regulates protein trafficking required for neural polarity. May also play a role in the maintenance of Ca(2+) and Mn(2+) homeostasis and signaling in the cytosol while preventing cytotoxicity. The sequence is that of Calcium-transporting ATPase type 2C member 1 from Mus musculus (Mouse).